The following is a 147-amino-acid chain: Hemoglobin subunit beta (147 aa).

N-acetylserine is present on serine 2. Residues 3-147 (FLSAEEKNLV…VASALAHRYH (145 aa)) enclose the Globin domain. The residue at position 45 (serine 45) is a Phosphoserine. Lysine 60 carries the post-translational modification N6-acetyllysine. Residue histidine 64 coordinates heme b. At lysine 83 the chain carries N6-acetyllysine. A heme b-binding site is contributed by histidine 93. At cysteine 94 the chain carries S-nitrosocysteine.

This sequence belongs to the globin family. Heterotetramer of two alpha chains and two beta chains. As to expression, red blood cells.

Involved in oxygen transport from the lung to the various peripheral tissues. In Panthera pardus orientalis (Amur leopard), this protein is Hemoglobin subunit beta (HBB).